Here is a 347-residue protein sequence, read N- to C-terminus: S-adenosylmethionine:tRNA ribosyltransferase-isomerase (347 aa).

This sequence belongs to the QueA family. Monomer.

It localises to the cytoplasm. The enzyme catalyses 7-aminomethyl-7-carbaguanosine(34) in tRNA + S-adenosyl-L-methionine = epoxyqueuosine(34) in tRNA + adenine + L-methionine + 2 H(+). It functions in the pathway tRNA modification; tRNA-queuosine biosynthesis. In terms of biological role, transfers and isomerizes the ribose moiety from AdoMet to the 7-aminomethyl group of 7-deazaguanine (preQ1-tRNA) to give epoxyqueuosine (oQ-tRNA). The polypeptide is S-adenosylmethionine:tRNA ribosyltransferase-isomerase (Gluconobacter oxydans (strain 621H) (Gluconobacter suboxydans)).